Consider the following 432-residue polypeptide: 3-phosphoshikimate 1-carboxyvinyltransferase (432 aa).

3 residues coordinate 3-phosphoshikimate: Lys-22, Ser-23, and Arg-27. Lys-22 lines the phosphoenolpyruvate pocket. Gly-96 and Arg-127 together coordinate phosphoenolpyruvate. Positions 173, 174, 175, 201, 317, 340, and 344 each coordinate 3-phosphoshikimate. Phosphoenolpyruvate is bound at residue Gln-175. The active-site Proton acceptor is the Asp-317. Phosphoenolpyruvate is bound by residues Arg-348, Arg-392, and Lys-417.

The protein belongs to the EPSP synthase family. In terms of assembly, monomer.

Its subcellular location is the cytoplasm. It catalyses the reaction 3-phosphoshikimate + phosphoenolpyruvate = 5-O-(1-carboxyvinyl)-3-phosphoshikimate + phosphate. It functions in the pathway metabolic intermediate biosynthesis; chorismate biosynthesis; chorismate from D-erythrose 4-phosphate and phosphoenolpyruvate: step 6/7. In terms of biological role, catalyzes the transfer of the enolpyruvyl moiety of phosphoenolpyruvate (PEP) to the 5-hydroxyl of shikimate-3-phosphate (S3P) to produce enolpyruvyl shikimate-3-phosphate and inorganic phosphate. In Mannheimia haemolytica (Pasteurella haemolytica), this protein is 3-phosphoshikimate 1-carboxyvinyltransferase.